Reading from the N-terminus, the 77-residue chain is UPF0291 protein YnzC (77 aa).

Residues 56–77 form a disordered region; it reads DPEGNDVTPEKLKREQRNNKLH. Residues 63 to 77 are compositionally biased toward basic and acidic residues; it reads TPEKLKREQRNNKLH.

The protein belongs to the UPF0291 family.

The protein localises to the cytoplasm. This is UPF0291 protein YnzC (ynzC) from Bacillus subtilis (strain 168).